Consider the following 339-residue polypeptide: Ketol-acid reductoisomerase (NADP(+)) (339 aa).

One can recognise a KARI N-terminal Rossmann domain in the interval Met1–Thr182. Residues Tyr24 to Gln27, Arg48, Ser51, Thr53, and Asp83 to Gln86 contribute to the NADP(+) site. His108 is an active-site residue. Gly134 contacts NADP(+). In terms of domain architecture, KARI C-terminal knotted spans Thr183–Ile328. Mg(2+) contacts are provided by Asp191, Glu195, Glu227, and Glu231. Substrate is bound at residue Ser252.

Belongs to the ketol-acid reductoisomerase family. Mg(2+) serves as cofactor.

It carries out the reaction (2R)-2,3-dihydroxy-3-methylbutanoate + NADP(+) = (2S)-2-acetolactate + NADPH + H(+). It catalyses the reaction (2R,3R)-2,3-dihydroxy-3-methylpentanoate + NADP(+) = (S)-2-ethyl-2-hydroxy-3-oxobutanoate + NADPH + H(+). Its pathway is amino-acid biosynthesis; L-isoleucine biosynthesis; L-isoleucine from 2-oxobutanoate: step 2/4. It functions in the pathway amino-acid biosynthesis; L-valine biosynthesis; L-valine from pyruvate: step 2/4. In terms of biological role, involved in the biosynthesis of branched-chain amino acids (BCAA). Catalyzes an alkyl-migration followed by a ketol-acid reduction of (S)-2-acetolactate (S2AL) to yield (R)-2,3-dihydroxy-isovalerate. In the isomerase reaction, S2AL is rearranged via a Mg-dependent methyl migration to produce 3-hydroxy-3-methyl-2-ketobutyrate (HMKB). In the reductase reaction, this 2-ketoacid undergoes a metal-dependent reduction by NADPH to yield (R)-2,3-dihydroxy-isovalerate. In Brucella abortus (strain S19), this protein is Ketol-acid reductoisomerase (NADP(+)).